A 382-amino-acid polypeptide reads, in one-letter code: Na(+)/H(+) antiporter NhaA (382 aa).

11 consecutive transmembrane segments (helical) span residues 14–34 (AGGI…NSSF), 49–69 (MSVS…LIGL), 87–107 (IFPA…YVAF), 117–137 (GWAI…ALLG), 146–166 (VFLL…IAFF), 171–191 (LSVL…LLNS), 205–225 (FILW…GVVL), 247–267 (ALHP…NAGI), 285–305 (VALG…YVAV), 321–341 (IFAV…ISSL), and 356–376 (LGIL…LHIS).

Belongs to the NhaA Na(+)/H(+) (TC 2.A.33) antiporter family.

It localises to the cell inner membrane. The enzyme catalyses Na(+)(in) + 2 H(+)(out) = Na(+)(out) + 2 H(+)(in). In terms of biological role, na(+)/H(+) antiporter that extrudes sodium in exchange for external protons. This Aliivibrio salmonicida (strain LFI1238) (Vibrio salmonicida (strain LFI1238)) protein is Na(+)/H(+) antiporter NhaA.